A 506-amino-acid chain; its full sequence is Anaerobic nitric oxide reductase transcription regulator NorR (506 aa).

Asp57 carries the 4-aspartylphosphate modification. The Sigma-54 factor interaction domain maps to 187-416; that stretch reads MIGLSPAMTQ…LEHAIHRAVV (230 aa). ATP contacts are provided by residues 215–222 and 278–287; these read GETGTGKE and ADNGTLFLDE. The segment at residues 481–500 is a DNA-binding region (H-T-H motif); it reads WAASARALETDVANLHRLAK.

The protein operates within nitrogen metabolism; nitric oxide reduction. Required for the expression of anaerobic nitric oxide (NO) reductase, acts as a transcriptional activator for at least the norVW operon. Activation also requires sigma-54. In Salmonella agona (strain SL483), this protein is Anaerobic nitric oxide reductase transcription regulator NorR.